The chain runs to 152 residues: Ribosome maturation factor RimP (152 aa).

It belongs to the RimP family.

The protein resides in the cytoplasm. Required for maturation of 30S ribosomal subunits. The sequence is that of Ribosome maturation factor RimP from Burkholderia vietnamiensis (strain G4 / LMG 22486) (Burkholderia cepacia (strain R1808)).